A 266-amino-acid chain; its full sequence is MGEGHRLPVASPRVAAIVPAAGRGERLGGGTPKALRALGGRPMLVRTVESLRRSRLVTQIVVAAPPTLVDAVAQLLGGDVYVIAGGAERVDSVRRALRAVDDDVSVVLVHDAARPLTPPELVDAVAAAVLDGHPAVIPVVPLADTVKEVDADGRVVRTPPRDGLRAVQTPQGFRRDVLSAAYALEDIAVTDDAGLVEALGVPVTTIPGAQEAFKVTRPADLVLAEALLARCDPADDARSAEARSAEARSEEPQFAGARSTDARSGG.

The span at 234 to 251 (ADDARSAEARSAEARSEE) shows a compositional bias: basic and acidic residues. Residues 234-266 (ADDARSAEARSAEARSEEPQFAGARSTDARSGG) are disordered.

Belongs to the IspD/TarI cytidylyltransferase family. IspD subfamily.

It carries out the reaction 2-C-methyl-D-erythritol 4-phosphate + CTP + H(+) = 4-CDP-2-C-methyl-D-erythritol + diphosphate. It participates in isoprenoid biosynthesis; isopentenyl diphosphate biosynthesis via DXP pathway; isopentenyl diphosphate from 1-deoxy-D-xylulose 5-phosphate: step 2/6. Functionally, catalyzes the formation of 4-diphosphocytidyl-2-C-methyl-D-erythritol from CTP and 2-C-methyl-D-erythritol 4-phosphate (MEP). The protein is 2-C-methyl-D-erythritol 4-phosphate cytidylyltransferase of Frankia casuarinae (strain DSM 45818 / CECT 9043 / HFP020203 / CcI3).